The chain runs to 298 residues: Small ribosomal subunit protein uS3m (298 aa).

This sequence belongs to the universal ribosomal protein uS3 family.

It is found in the mitochondrion. The protein is Small ribosomal subunit protein uS3m (RPS3) of Acanthamoeba castellanii (Amoeba).